Reading from the N-terminus, the 284-residue chain is L-ribulose-5-phosphate 3-epimerase UlaE (284 aa).

This sequence belongs to the L-ribulose-5-phosphate 3-epimerase family.

The catalysed reaction is L-ribulose 5-phosphate = L-xylulose 5-phosphate. Its pathway is cofactor degradation; L-ascorbate degradation; D-xylulose 5-phosphate from L-ascorbate: step 3/4. Its function is as follows. Catalyzes the isomerization of L-xylulose-5-phosphate to L-ribulose-5-phosphate. Is involved in the anaerobic L-ascorbate utilization. This chain is L-ribulose-5-phosphate 3-epimerase UlaE, found in Escherichia coli (strain SMS-3-5 / SECEC).